A 148-amino-acid chain; its full sequence is Glyoxalase domain-containing protein 5 (148 aa).

One can recognise a VOC domain in the interval 25–145; that stretch reads RLDHIVMTVK…DRNLLEVSSY (121 aa).

Belongs to the glyoxalase I family.

This Mus musculus (Mouse) protein is Glyoxalase domain-containing protein 5 (Glod5).